We begin with the raw amino-acid sequence, 408 residues long: tRNA wybutosine-synthesizing protein 2 homolog (408 aa).

Residues Ser201, Lys208, Glu248, and 276–277 (DN) each bind S-adenosyl-L-methionine.

It belongs to the class I-like SAM-binding methyltransferase superfamily. TRM5/TYW2 family.

It catalyses the reaction 4-demethylwyosine(37) in tRNA(Phe) + S-adenosyl-L-methionine = 4-demethyl-7-[(3S)-3-amino-3-carboxypropyl]wyosine(37) in tRNA(Phe) + S-methyl-5'-thioadenosine + H(+). Its pathway is tRNA modification; wybutosine-tRNA(Phe) biosynthesis. Its function is as follows. S-adenosyl-L-methionine-dependent transferase that acts as a component of the wybutosine biosynthesis pathway. Wybutosine is a hyper modified guanosine with a tricyclic base found at the 3'-position adjacent to the anticodon of eukaryotic phenylalanine tRNA. Catalyzes the transfer of the alpha-amino-alpha-carboxypropyl (acp) group from S-adenosyl-L-methionine to the C-7 position of 4-demethylwyosine (imG-14) to produce wybutosine-86. This is tRNA wybutosine-synthesizing protein 2 homolog (trmt12) from Danio rerio (Zebrafish).